The sequence spans 152 residues: D-aminoacyl-tRNA deacylase (152 aa).

Residues 138–139 (GP) carry the Gly-cisPro motif, important for rejection of L-amino acids motif.

It belongs to the DTD family. Homodimer.

The protein resides in the cytoplasm. It catalyses the reaction glycyl-tRNA(Ala) + H2O = tRNA(Ala) + glycine + H(+). The catalysed reaction is a D-aminoacyl-tRNA + H2O = a tRNA + a D-alpha-amino acid + H(+). Its function is as follows. An aminoacyl-tRNA editing enzyme that deacylates mischarged D-aminoacyl-tRNAs. Also deacylates mischarged glycyl-tRNA(Ala), protecting cells against glycine mischarging by AlaRS. Acts via tRNA-based rather than protein-based catalysis; rejects L-amino acids rather than detecting D-amino acids in the active site. By recycling D-aminoacyl-tRNA to D-amino acids and free tRNA molecules, this enzyme counteracts the toxicity associated with the formation of D-aminoacyl-tRNA entities in vivo and helps enforce protein L-homochirality. This is D-aminoacyl-tRNA deacylase from Chloroherpeton thalassium (strain ATCC 35110 / GB-78).